We begin with the raw amino-acid sequence, 658 residues long: UvrABC system protein B (658 aa).

In terms of domain architecture, Helicase ATP-binding spans glutamate 26–arginine 413. Position 39-46 (glycine 39–threonine 46) interacts with ATP. Positions tyrosine 92–isoleucine 115 match the Beta-hairpin motif. In terms of domain architecture, Helicase C-terminal spans glutamine 430 to isoleucine 596. The region spanning glutamate 622–glutamate 657 is the UVR domain.

The protein belongs to the UvrB family. As to quaternary structure, forms a heterotetramer with UvrA during the search for lesions. Interacts with UvrC in an incision complex.

It is found in the cytoplasm. Its function is as follows. The UvrABC repair system catalyzes the recognition and processing of DNA lesions. A damage recognition complex composed of 2 UvrA and 2 UvrB subunits scans DNA for abnormalities. Upon binding of the UvrA(2)B(2) complex to a putative damaged site, the DNA wraps around one UvrB monomer. DNA wrap is dependent on ATP binding by UvrB and probably causes local melting of the DNA helix, facilitating insertion of UvrB beta-hairpin between the DNA strands. Then UvrB probes one DNA strand for the presence of a lesion. If a lesion is found the UvrA subunits dissociate and the UvrB-DNA preincision complex is formed. This complex is subsequently bound by UvrC and the second UvrB is released. If no lesion is found, the DNA wraps around the other UvrB subunit that will check the other stand for damage. The polypeptide is UvrABC system protein B (Bacillus cereus (strain ZK / E33L)).